Here is a 307-residue protein sequence, read N- to C-terminus: MKLQGAGLGYRRNLAEDFLQLPSNNAIQFIEVAPENWSKMGGMARYQFDQAAERFPLAVHGLSLSLGGQAPLDRELLRNTKALINQYNSSFFSEHLSYCECEGHLYDLLPMPFTEEAVKHVAQRIRDVQDFLGLQISLENTSYYLHSPTSTMNEVEFLNAIAQEADCGIHLDVNNIYVNGVNHGLLDPYIFLDQVDVKRVNYIHIAGHDEEHSAAQVVENSANESFNKVKGAYRHLPELLIDTHGEAVKGTVWDLLEYAYQRLPTIPPTLLERDFNFPPFAELYAEVEHIAQLQQKYAHTEVMSYAA.

The protein belongs to the UPF0276 family.

This chain is UPF0276 protein HI_1600, found in Haemophilus influenzae (strain ATCC 51907 / DSM 11121 / KW20 / Rd).